The primary structure comprises 452 residues: THO complex subunit 5A (452 aa).

It belongs to the THOC5 family. As to quaternary structure, component of the THO complex, which is composed of THO1, THO2, THO3, THO5, THO6 and THO7.

The protein localises to the nucleus. Acts as a component of the THO subcomplex of the TREX complex which is thought to couple mRNA transcription, processing and nuclear export. In Arabidopsis thaliana (Mouse-ear cress), this protein is THO complex subunit 5A (THO5A).